Reading from the N-terminus, the 433-residue chain is CinA-like protein (433 aa).

Belongs to the CinA family.

The protein is CinA-like protein of Prochlorococcus marinus (strain MIT 9515).